The primary structure comprises 22 residues: NADH-ubiquinone oxidoreductase 16 kDa subunit (22 aa).

In terms of assembly, complex I is composed of about 45 different subunits.

It is found in the mitochondrion inner membrane. The enzyme catalyses a ubiquinone + NADH + 5 H(+)(in) = a ubiquinol + NAD(+) + 4 H(+)(out). Its function is as follows. Transfer of electrons from NADH to the respiratory chain. The immediate electron acceptor for the enzyme is believed to be ubiquinone. The polypeptide is NADH-ubiquinone oxidoreductase 16 kDa subunit (Solanum tuberosum (Potato)).